The following is a 127-amino-acid chain: MTKKAIIPAGTSKPIAPFVPGSMADGVLYVSGTLPFDKDNNVVHVGDATAQTRHVLEAIKSVVETAGGTLDDVTFNMIMIRDWADYAKVNEVYAEYFAGEKPARYCIQCGLVKPEALIEIASIAHIG.

Belongs to the RutC family.

It carries out the reaction (Z)-3-aminoacrylate + H2O + H(+) = 3-oxopropanoate + NH4(+). Functionally, involved in pyrimidine catabolism. Catalyzes the deamination of 3-aminoacrylate to malonic semialdehyde, a reaction that can also occur spontaneously. RutC may facilitate the reaction and modulate the metabolic fitness, rather than catalyzing essential functions. The protein is 3-aminoacrylate deaminase RutC of Pseudomonas syringae pv. syringae (strain B728a).